A 183-amino-acid chain; its full sequence is ARS-binding factor 2, mitochondrial (183 aa).

Residues 1–26 (MNSYSLLTRSFHESSKPLFNLASTLL) constitute a mitochondrion transit peptide. 2 consecutive DNA-binding regions (HMG box) follow at residues 43–111 (PKRP…KEFD) and 116–183 (PKKP…YPLN).

It is found in the mitochondrion. The protein resides in the nucleus. Specific binding to the autonomously replicating sequence 1 (ARS1). Interaction with regulatory regions: probably involved in compacting the mitochondrial genome. It might play a positive role in gene expression and replication. The protein is ARS-binding factor 2, mitochondrial (ABF2) of Saccharomyces cerevisiae (strain ATCC 204508 / S288c) (Baker's yeast).